Here is a 237-residue protein sequence, read N- to C-terminus: UPF0173 metal-dependent hydrolase BOV_A0561 (237 aa).

Belongs to the UPF0173 family.

The protein is UPF0173 metal-dependent hydrolase BOV_A0561 of Brucella ovis (strain ATCC 25840 / 63/290 / NCTC 10512).